The chain runs to 279 residues: Type II iodothyronine deiodinase (279 aa).

The Lumenal portion of the chain corresponds to 1–7 (MGLLSAD). A helical; Signal-anchor for type III membrane protein transmembrane segment spans residues 8–28 (LLITLQILPVFFSNCLFLALY). At 29–279 (DSVILLKHMV…TEDLSTDVSL (251 aa)) the chain is on the cytoplasmic side. Selenocysteine 132 is a catalytic residue. 2 non-standard amino acids (selenocysteine) are found at residues selenocysteine 132 and selenocysteine 265.

It belongs to the iodothyronine deiodinase family. As to quaternary structure, predominantly monomer. Can form homodimers but homodimerization is not essential for enzyme activity. Highly expressed in liver and in various parts of the brain including telencephalon, hippocampus, cerebellum, and brain stem, and weakly expressed in thyroid, lung, and small intestine. Not detected in skeletal muscle, heart atria or ventricle, gizzard or kidney.

Its subcellular location is the endoplasmic reticulum membrane. It catalyses the reaction 3,3',5-triiodo-L-thyronine + iodide + A + H(+) = L-thyroxine + AH2. The enzyme catalyses 3,3'-diiodo-L-thyronine + iodide + A + H(+) = 3,3',5'-triiodo-L-thyronine + AH2. It carries out the reaction 3'-iodo-L-thyronine + iodide + A + H(+) = 3',5'-diiodo-L-thyronine + AH2. The catalysed reaction is 3,3'-diiodothyronamine + iodide + A + H(+) = 3,3',5'-triiodothyronamine + AH2. It catalyses the reaction 3'-iodothyronamine + iodide + A + H(+) = 3',5'-diiodothyronamine + AH2. With respect to regulation, not inhibited by N(6)-propylthiouracil. Plays a crucial role in the metabolism of thyroid hormones (TH) and has specific roles in TH activation and inactivation by deiodination. Catalyzes the deiodination of L-thyroxine (T4) to 3,5,3'-triiodothyronine (T3) and 3,3',5'-triiodothyronine (rT3) to 3,3'-diiodothyronine (3,3'-T2) via outer-ring deiodination (ORD). Catalyzes the deiodination of 3',5'-diiodothyronine (3',5'-T2) to 3'-monoiodothyronine (3'-T1) via ORD. Catalyzes the phenolic ring deiodinations of 3,3',5'-triiodothyronamine and 3',5'- diiodothyronamine. The chain is Type II iodothyronine deiodinase (DIO2) from Gallus gallus (Chicken).